We begin with the raw amino-acid sequence, 347 residues long: Ornithine carbamoyltransferase (347 aa).

Residues 56 to 59 (STRT), Q83, R107, and 134 to 137 (HPTQ) contribute to the carbamoyl phosphate site. Residues N168, D232, and 236–237 (SM) each bind L-ornithine. Residues 274–275 (CL) and R320 contribute to the carbamoyl phosphate site.

The protein belongs to the aspartate/ornithine carbamoyltransferase superfamily. OTCase family.

The protein resides in the cytoplasm. It catalyses the reaction carbamoyl phosphate + L-ornithine = L-citrulline + phosphate + H(+). Reversibly catalyzes the transfer of the carbamoyl group from carbamoyl phosphate (CP) to the N(epsilon) atom of ornithine (ORN) to produce L-citrulline. This Blochmanniella floridana protein is Ornithine carbamoyltransferase.